We begin with the raw amino-acid sequence, 146 residues long: SsrA-binding protein (146 aa).

Residues 127–139 (KRQTIKDRDNSRE) are compositionally biased toward basic and acidic residues. The tract at residues 127–146 (KRQTIKDRDNSREARKHIRV) is disordered.

It belongs to the SmpB family.

The protein localises to the cytoplasm. Its function is as follows. Required for rescue of stalled ribosomes mediated by trans-translation. Binds to transfer-messenger RNA (tmRNA), required for stable association of tmRNA with ribosomes. tmRNA and SmpB together mimic tRNA shape, replacing the anticodon stem-loop with SmpB. tmRNA is encoded by the ssrA gene; the 2 termini fold to resemble tRNA(Ala) and it encodes a 'tag peptide', a short internal open reading frame. During trans-translation Ala-aminoacylated tmRNA acts like a tRNA, entering the A-site of stalled ribosomes, displacing the stalled mRNA. The ribosome then switches to translate the ORF on the tmRNA; the nascent peptide is terminated with the 'tag peptide' encoded by the tmRNA and targeted for degradation. The ribosome is freed to recommence translation, which seems to be the essential function of trans-translation. In Malacoplasma penetrans (strain HF-2) (Mycoplasma penetrans), this protein is SsrA-binding protein.